Consider the following 124-residue polypeptide: Putative membrane protein insertion efficiency factor (124 aa).

It belongs to the UPF0161 family.

It is found in the cell inner membrane. In terms of biological role, could be involved in insertion of integral membrane proteins into the membrane. This chain is Putative membrane protein insertion efficiency factor, found in Psychrobacter arcticus (strain DSM 17307 / VKM B-2377 / 273-4).